We begin with the raw amino-acid sequence, 458 residues long: Glutamyl-tRNA reductase (458 aa).

Substrate-binding positions include 49 to 52 (TCNR), Ser111, 116 to 118 (ETE), and Gln122. Catalysis depends on Cys50, which acts as the Nucleophile. An NADP(+)-binding site is contributed by 191-196 (GAGKMS). Basic and acidic residues-rich tracts occupy residues 426–440 (IPKD…KEVE) and 448–458 (ERGHHESDFHN). Residues 426 to 458 (IPKDGEEHSSSKEVESVTQSSTERGHHESDFHN) are disordered.

It belongs to the glutamyl-tRNA reductase family. In terms of assembly, homodimer.

It catalyses the reaction (S)-4-amino-5-oxopentanoate + tRNA(Glu) + NADP(+) = L-glutamyl-tRNA(Glu) + NADPH + H(+). Its pathway is porphyrin-containing compound metabolism; protoporphyrin-IX biosynthesis; 5-aminolevulinate from L-glutamyl-tRNA(Glu): step 1/2. Its function is as follows. Catalyzes the NADPH-dependent reduction of glutamyl-tRNA(Glu) to glutamate 1-semialdehyde (GSA). The chain is Glutamyl-tRNA reductase from Natranaerobius thermophilus (strain ATCC BAA-1301 / DSM 18059 / JW/NM-WN-LF).